Reading from the N-terminus, the 411-residue chain is Putative competence-damage inducible protein (411 aa).

Belongs to the CinA family.

The polypeptide is Putative competence-damage inducible protein (Alkaliphilus metalliredigens (strain QYMF)).